A 464-amino-acid chain; its full sequence is Argininosuccinate lyase (464 aa).

The protein belongs to the lyase 1 family. Argininosuccinate lyase subfamily.

Its subcellular location is the cytoplasm. The enzyme catalyses 2-(N(omega)-L-arginino)succinate = fumarate + L-arginine. Its pathway is amino-acid biosynthesis; L-arginine biosynthesis; L-arginine from L-ornithine and carbamoyl phosphate: step 3/3. This Pseudomonas fluorescens (strain SBW25) protein is Argininosuccinate lyase.